The sequence spans 77 residues: uncharacterized protein (77 aa).

A helical membrane pass occupies residues 36–52 (FYQLILKVLSALLLLSV).

Its subcellular location is the membrane. This is an uncharacterized protein from Saccharomyces cerevisiae (strain ATCC 204508 / S288c) (Baker's yeast).